The chain runs to 100 residues: Large ribosomal subunit protein eL21 (100 aa).

Positions 1–21 (MVKRTHGYRYKSRKLLRKKPR) are disordered.

This sequence belongs to the eukaryotic ribosomal protein eL21 family.

This chain is Large ribosomal subunit protein eL21, found in Pyrobaculum islandicum (strain DSM 4184 / JCM 9189 / GEO3).